The sequence spans 71 residues: Small ribosomal subunit protein bS21 (71 aa).

It belongs to the bacterial ribosomal protein bS21 family.

This Blochmanniella pennsylvanica (strain BPEN) protein is Small ribosomal subunit protein bS21.